The primary structure comprises 668 residues: Nuclear pore complex protein Nup75 (668 aa).

Belongs to the nucleoporin Nup85 family. In terms of assembly, component of the nuclear pore complex (NPC). Component of the NPC Nup107-160 subcomplex.

The protein localises to the nucleus. It localises to the nuclear pore complex. The protein resides in the nucleus membrane. Component of the nuclear pore complex (NPC) that seems to be required for NPC assembly and maintenance. Required for nuclear import of phosphorylated Mad via importin msk. Has no role in classical nuclear localization signal (cNLS)-dependent nuclear import via importin-beta. Facilitates the interaction between Nup93 and sec13 with msk. The chain is Nuclear pore complex protein Nup75 from Drosophila melanogaster (Fruit fly).